The sequence spans 350 residues: Biotin synthase (350 aa).

The Radical SAM core domain maps to 41-268 (NEVQISRLLS…KSRVRLSAGR (228 aa)). [4Fe-4S] cluster contacts are provided by cysteine 56, cysteine 60, and cysteine 63. [2Fe-2S] cluster is bound by residues cysteine 100, cysteine 131, cysteine 191, and arginine 263.

This sequence belongs to the radical SAM superfamily. Biotin synthase family. Homodimer. [4Fe-4S] cluster serves as cofactor. Requires [2Fe-2S] cluster as cofactor.

The catalysed reaction is (4R,5S)-dethiobiotin + (sulfur carrier)-SH + 2 reduced [2Fe-2S]-[ferredoxin] + 2 S-adenosyl-L-methionine = (sulfur carrier)-H + biotin + 2 5'-deoxyadenosine + 2 L-methionine + 2 oxidized [2Fe-2S]-[ferredoxin]. It participates in cofactor biosynthesis; biotin biosynthesis; biotin from 7,8-diaminononanoate: step 2/2. Catalyzes the conversion of dethiobiotin (DTB) to biotin by the insertion of a sulfur atom into dethiobiotin via a radical-based mechanism. This Shewanella halifaxensis (strain HAW-EB4) protein is Biotin synthase.